The sequence spans 159 residues: Succinate dehydrogenase [ubiquinone] cytochrome b small subunit, mitochondrial (159 aa).

The N-terminal 30 residues, 1–30, are a transit peptide targeting the mitochondrion; it reads MLQTRLGLGALRQGRLLFAVKSFSTTSVAK. The Mitochondrial matrix portion of the chain corresponds to 31-65; it reads IFPPPPQTIKGTVNDAAVFPHHSKLHGSYHWDFER. A helical transmembrane segment spans residues 66–82; sequence IIAIAMVPQVMIPLFTG. Residues 83–89 are Mitochondrial intermembrane-facing; sequence TSHPLMD. Residues 90–109 traverse the membrane as a helical segment; sequence AALACTLITHAHLGFESCVI. Histidine 99 is a binding site for heme. Over 110–122 the chain is Mitochondrial matrix; sequence DYFPARRFKKLSP. A ubiquinone is bound at residue tyrosine 111. The helical transmembrane segment at 123–140 threads the bilayer; sequence LMHWILRGCTVLTLIGVY. The Mitochondrial intermembrane portion of the chain corresponds to 141-159; it reads EFNTNDIGLTEGIKKLWKS.

The protein belongs to the CybS family. As to quaternary structure, forms part of complex II containing four subunits: a flavoprotein (FP), an iron-sulfur protein (IP) and a cytochrome b composed of a large and a small subunit.

It localises to the mitochondrion inner membrane. It participates in carbohydrate metabolism; tricarboxylic acid cycle. In terms of biological role, membrane-anchoring subunit of succinate dehydrogenase (SDH) that is involved in complex II of the mitochondrial electron transport chain and is responsible for transferring electrons from succinate to ubiquinone (coenzyme Q). This chain is Succinate dehydrogenase [ubiquinone] cytochrome b small subunit, mitochondrial (sdh4), found in Schizosaccharomyces pombe (strain 972 / ATCC 24843) (Fission yeast).